An 849-amino-acid chain; its full sequence is Alanine--tRNA ligase (849 aa).

Positions 551, 555, 653, and 657 each coordinate Zn(2+).

This sequence belongs to the class-II aminoacyl-tRNA synthetase family. Requires Zn(2+) as cofactor.

The protein resides in the cytoplasm. The catalysed reaction is tRNA(Ala) + L-alanine + ATP = L-alanyl-tRNA(Ala) + AMP + diphosphate. Catalyzes the attachment of alanine to tRNA(Ala) in a two-step reaction: alanine is first activated by ATP to form Ala-AMP and then transferred to the acceptor end of tRNA(Ala). Also edits incorrectly charged Ser-tRNA(Ala) and Gly-tRNA(Ala) via its editing domain. This is Alanine--tRNA ligase from Sulfurimonas denitrificans (strain ATCC 33889 / DSM 1251) (Thiomicrospira denitrificans (strain ATCC 33889 / DSM 1251)).